A 445-amino-acid polypeptide reads, in one-letter code: DNA repair protein RadA (445 aa).

The segment at 10–27 (CSNCANISHKWSGQCFDC) adopts a C4-type zinc-finger fold. Residue 90-97 (GEPGIGKS) coordinates ATP. Residues 249 to 253 (KNRFG) carry the RadA KNRFG motif motif. The tract at residues 348-445 (EIYLSIAGGL…HLQDLKEIIK (98 aa)) is lon-protease-like.

The protein belongs to the RecA family. RadA subfamily.

Its function is as follows. DNA-dependent ATPase involved in processing of recombination intermediates, plays a role in repairing DNA breaks. Stimulates the branch migration of RecA-mediated strand transfer reactions, allowing the 3' invading strand to extend heteroduplex DNA faster. Binds ssDNA in the presence of ADP but not other nucleotides, has ATPase activity that is stimulated by ssDNA and various branched DNA structures, but inhibited by SSB. Does not have RecA's homology-searching function. The sequence is that of DNA repair protein RadA from Rickettsia typhi (strain ATCC VR-144 / Wilmington).